Consider the following 368-residue polypeptide: MTVKLTIDCMGGDHGPSVTVPAAVKFVRSHPDAHLMLVGIESAIRAQLKKCKALGEPALSVVPATEVVAMDDPVEVALRKKKDSSMRVALNHVKEGAAQACISAGNTGALMAVSRYVLKTLPGIERPAIAFALPNPTGYTMMLDLGANVDCEPQHLLQFAEMGHALVAALEGKERPTIGLLNIGEEVIKGNETIKRAGELLRASTLNFRGNVEGNDIYKGTVDVIVCDGFVGNVALKTSEGLAQMLADIIKEEFSRSLLSKLMAILALPVLLRFKKRVDHRQYNGAALLGLRSLVIKSHGSADAYAFEWAIKRGYDAVKNGVLERLSRAMAENAAPLGESGRDANGAGQASPSAGQPAEPSAALSSKT.

A disordered region spans residues 334–368 (AAPLGESGRDANGAGQASPSAGQPAEPSAALSSKT).

The protein belongs to the PlsX family. Homodimer. Probably interacts with PlsY.

The protein resides in the cytoplasm. The enzyme catalyses a fatty acyl-[ACP] + phosphate = an acyl phosphate + holo-[ACP]. Its pathway is lipid metabolism; phospholipid metabolism. In terms of biological role, catalyzes the reversible formation of acyl-phosphate (acyl-PO(4)) from acyl-[acyl-carrier-protein] (acyl-ACP). This enzyme utilizes acyl-ACP as fatty acyl donor, but not acyl-CoA. In Burkholderia pseudomallei (strain 1106a), this protein is Phosphate acyltransferase.